We begin with the raw amino-acid sequence, 83 residues long: MKTLLLTLVVVTIVCLDLGYTRRCFNHPSSQPQTNKSCPPGENSCYNKQWRDHRGTITERGCGCPQVKSGIKLTCCQSDDCNN.

The signal sequence occupies residues 1-21 (MKTLLLTLVVVTIVCLDLGYT). 4 cysteine pairs are disulfide-bonded: Cys-24-Cys-45, Cys-38-Cys-62, Cys-64-Cys-75, and Cys-76-Cys-81.

It belongs to the three-finger toxin family. Short-chain subfamily. Type I alpha-neurotoxin sub-subfamily. In terms of tissue distribution, expressed by the venom gland.

The protein resides in the secreted. Functionally, binds to muscle nicotinic acetylcholine receptor (nAChR) and inhibit acetylcholine from binding to the receptor, thereby impairing neuromuscular transmission. In Laticauda laticaudata (Blue-ringed sea krait), this protein is Short neurotoxin B.